The primary structure comprises 299 residues: Bifunctional protein FolD (299 aa).

Residues 168 to 170 (GRS), serine 193, and isoleucine 234 contribute to the NADP(+) site.

This sequence belongs to the tetrahydrofolate dehydrogenase/cyclohydrolase family. As to quaternary structure, homodimer.

It carries out the reaction (6R)-5,10-methylene-5,6,7,8-tetrahydrofolate + NADP(+) = (6R)-5,10-methenyltetrahydrofolate + NADPH. The enzyme catalyses (6R)-5,10-methenyltetrahydrofolate + H2O = (6R)-10-formyltetrahydrofolate + H(+). It participates in one-carbon metabolism; tetrahydrofolate interconversion. In terms of biological role, catalyzes the oxidation of 5,10-methylenetetrahydrofolate to 5,10-methenyltetrahydrofolate and then the hydrolysis of 5,10-methenyltetrahydrofolate to 10-formyltetrahydrofolate. This is Bifunctional protein FolD from Bartonella bacilliformis (strain ATCC 35685 / KC583 / Herrer 020/F12,63).